The chain runs to 87 residues: NAD(P)H-quinone oxidoreductase subunit O (87 aa).

Residues 1–10 (MSEQTGKVDD) are compositionally biased toward basic and acidic residues. Residues 1-23 (MSEQTGKVDDSQSPPKVQKKLRK) form a disordered region.

Belongs to the complex I NdhO subunit family. In terms of assembly, NDH-1 can be composed of about 15 different subunits; different subcomplexes with different compositions have been identified which probably have different functions.

It is found in the cellular thylakoid membrane. It carries out the reaction a plastoquinone + NADH + (n+1) H(+)(in) = a plastoquinol + NAD(+) + n H(+)(out). The enzyme catalyses a plastoquinone + NADPH + (n+1) H(+)(in) = a plastoquinol + NADP(+) + n H(+)(out). NDH-1 shuttles electrons from an unknown electron donor, via FMN and iron-sulfur (Fe-S) centers, to quinones in the respiratory and/or the photosynthetic chain. The immediate electron acceptor for the enzyme in this species is believed to be plastoquinone. Couples the redox reaction to proton translocation, and thus conserves the redox energy in a proton gradient. Cyanobacterial NDH-1 also plays a role in inorganic carbon-concentration. The protein is NAD(P)H-quinone oxidoreductase subunit O of Prochlorococcus marinus (strain NATL2A).